Reading from the N-terminus, the 95-residue chain is Small ribosomal subunit protein bS6 (95 aa).

Belongs to the bacterial ribosomal protein bS6 family.

In terms of biological role, binds together with bS18 to 16S ribosomal RNA. The chain is Small ribosomal subunit protein bS6 from Geobacillus sp. (strain WCH70).